The sequence spans 162 residues: Deoxyuridine 5'-triphosphate nucleotidohydrolase (162 aa).

Residue Ser11 is modified to Phosphoserine. DUTP contacts are provided by residues 83-85, 97-103, Gly108, Arg151, and 156-157; these read RSG, GVIDEDY, and FG.

This sequence belongs to the dUTPase family. As to quaternary structure, homotrimer. It depends on Mg(2+) as a cofactor. Phosphorylated in vivo on Ser-11, a reaction that can be catalyzed in vitro by CDC2.

It is found in the nucleus. The enzyme catalyses dUTP + H2O = dUMP + diphosphate + H(+). It functions in the pathway pyrimidine metabolism; dUMP biosynthesis; dUMP from dCTP (dUTP route): step 2/2. In terms of biological role, catalyzes the cleavage of 2'-deoxyuridine 5'-triphosphate (dUTP) into 2'-deoxyuridine 5'-monophosphate (dUMP) and inorganic pyrophosphate and through its action efficiently prevents uracil misincorporation into DNA and at the same time provides dUMP, the substrate for de novo thymidylate biosynthesis. Inhibits peroxisome proliferator-activated receptor (PPAR) activity by binding of its N-terminal to PPAR, preventing the latter's dimerization with retinoid X receptor. Essential for embryonic development. This Mus musculus (Mouse) protein is Deoxyuridine 5'-triphosphate nucleotidohydrolase (Dut).